A 227-amino-acid chain; its full sequence is MAYPFQLGLQDATSPIMEELTNFHDHTLMIVFLISSLVLYIISLMLTTKLTHTSTMDAQEVETIWTILPAVILILIALPSLRILYMMDEINNPVLTVKTMGHQWYWSYEYTDYEDLCFDSYMIPTTDLKPGELRLLEVDNRVVLPMELPIRMLISSEDVLHSWAVPSLGLKTDAIPGRLNQATLTSNRPGLFYGQCSEICGSNHSFMPIVLEMVPLKHFENWSASMI.

The Mitochondrial intermembrane portion of the chain corresponds to 1-14; it reads MAYPFQLGLQDATS. The helical transmembrane segment at 15–45 threads the bilayer; sequence PIMEELTNFHDHTLMIVFLISSLVLYIISLM. Residues 46 to 59 are Mitochondrial matrix-facing; that stretch reads LTTKLTHTSTMDAQ. The helical transmembrane segment at 60–87 threads the bilayer; sequence EVETIWTILPAVILILIALPSLRILYMM. At 88–227 the chain is on the mitochondrial intermembrane side; the sequence is DEINNPVLTV…HFENWSASMI (140 aa). Cu cation contacts are provided by His161, Cys196, Glu198, Cys200, His204, and Met207. Glu198 lines the Mg(2+) pocket.

Belongs to the cytochrome c oxidase subunit 2 family. In terms of assembly, component of the cytochrome c oxidase (complex IV, CIV), a multisubunit enzyme composed of 14 subunits. The complex is composed of a catalytic core of 3 subunits MT-CO1, MT-CO2 and MT-CO3, encoded in the mitochondrial DNA, and 11 supernumerary subunits COX4I, COX5A, COX5B, COX6A, COX6B, COX6C, COX7A, COX7B, COX7C, COX8 and NDUFA4, which are encoded in the nuclear genome. The complex exists as a monomer or a dimer and forms supercomplexes (SCs) in the inner mitochondrial membrane with NADH-ubiquinone oxidoreductase (complex I, CI) and ubiquinol-cytochrome c oxidoreductase (cytochrome b-c1 complex, complex III, CIII), resulting in different assemblies (supercomplex SCI(1)III(2)IV(1) and megacomplex MCI(2)III(2)IV(2)). Found in a complex with TMEM177, COA6, COX18, COX20, SCO1 and SCO2. Interacts with TMEM177 in a COX20-dependent manner. Interacts with COX20. Interacts with COX16. Cu cation serves as cofactor.

The protein localises to the mitochondrion inner membrane. The catalysed reaction is 4 Fe(II)-[cytochrome c] + O2 + 8 H(+)(in) = 4 Fe(III)-[cytochrome c] + 2 H2O + 4 H(+)(out). In terms of biological role, component of the cytochrome c oxidase, the last enzyme in the mitochondrial electron transport chain which drives oxidative phosphorylation. The respiratory chain contains 3 multisubunit complexes succinate dehydrogenase (complex II, CII), ubiquinol-cytochrome c oxidoreductase (cytochrome b-c1 complex, complex III, CIII) and cytochrome c oxidase (complex IV, CIV), that cooperate to transfer electrons derived from NADH and succinate to molecular oxygen, creating an electrochemical gradient over the inner membrane that drives transmembrane transport and the ATP synthase. Cytochrome c oxidase is the component of the respiratory chain that catalyzes the reduction of oxygen to water. Electrons originating from reduced cytochrome c in the intermembrane space (IMS) are transferred via the dinuclear copper A center (CU(A)) of subunit 2 and heme A of subunit 1 to the active site in subunit 1, a binuclear center (BNC) formed by heme A3 and copper B (CU(B)). The BNC reduces molecular oxygen to 2 water molecules using 4 electrons from cytochrome c in the IMS and 4 protons from the mitochondrial matrix. The polypeptide is Cytochrome c oxidase subunit 2 (MT-CO2) (Batomys granti (Luzon hairy-tailed rat)).